The following is a 345-amino-acid chain: Glycerol-3-phosphate dehydrogenase [NAD(P)+] (345 aa).

Residues Ser11, Trp12, Arg32, Arg33, and Lys105 each coordinate NADPH. Positions 105, 136, and 138 each coordinate sn-glycerol 3-phosphate. Ala140 contacts NADPH. 5 residues coordinate sn-glycerol 3-phosphate: Lys191, Asp244, Ser254, Arg255, and Asn256. Lys191 functions as the Proton acceptor in the catalytic mechanism. Position 255 (Arg255) interacts with NADPH. The NADPH site is built by Val279 and Glu281.

This sequence belongs to the NAD-dependent glycerol-3-phosphate dehydrogenase family.

The protein localises to the cytoplasm. The enzyme catalyses sn-glycerol 3-phosphate + NAD(+) = dihydroxyacetone phosphate + NADH + H(+). It carries out the reaction sn-glycerol 3-phosphate + NADP(+) = dihydroxyacetone phosphate + NADPH + H(+). Its pathway is membrane lipid metabolism; glycerophospholipid metabolism. In terms of biological role, catalyzes the reduction of the glycolytic intermediate dihydroxyacetone phosphate (DHAP) to sn-glycerol 3-phosphate (G3P), the key precursor for phospholipid synthesis. This is Glycerol-3-phosphate dehydrogenase [NAD(P)+] from Halalkalibacterium halodurans (strain ATCC BAA-125 / DSM 18197 / FERM 7344 / JCM 9153 / C-125) (Bacillus halodurans).